The primary structure comprises 334 residues: Ketol-acid reductoisomerase (NADP(+)) (334 aa).

A KARI N-terminal Rossmann domain is found at 1–181; it reads MTTVYYDQSV…GATRAGVLET (181 aa). NADP(+) is bound by residues 25 to 28, Arg-48, Ser-52, and 82 to 85; these read YGSQ and DEIQ. Residue His-107 is part of the active site. Gly-133 provides a ligand contact to NADP(+). Positions 182 to 327 constitute a KARI C-terminal knotted domain; the sequence is SFKEETETDL…RELRDMMPFI (146 aa). Mg(2+)-binding residues include Asp-190, Glu-194, Glu-226, and Glu-230. Ser-251 lines the substrate pocket.

The protein belongs to the ketol-acid reductoisomerase family. It depends on Mg(2+) as a cofactor.

It carries out the reaction (2R)-2,3-dihydroxy-3-methylbutanoate + NADP(+) = (2S)-2-acetolactate + NADPH + H(+). It catalyses the reaction (2R,3R)-2,3-dihydroxy-3-methylpentanoate + NADP(+) = (S)-2-ethyl-2-hydroxy-3-oxobutanoate + NADPH + H(+). It functions in the pathway amino-acid biosynthesis; L-isoleucine biosynthesis; L-isoleucine from 2-oxobutanoate: step 2/4. It participates in amino-acid biosynthesis; L-valine biosynthesis; L-valine from pyruvate: step 2/4. Its function is as follows. Involved in the biosynthesis of branched-chain amino acids (BCAA). Catalyzes an alkyl-migration followed by a ketol-acid reduction of (S)-2-acetolactate (S2AL) to yield (R)-2,3-dihydroxy-isovalerate. In the isomerase reaction, S2AL is rearranged via a Mg-dependent methyl migration to produce 3-hydroxy-3-methyl-2-ketobutyrate (HMKB). In the reductase reaction, this 2-ketoacid undergoes a metal-dependent reduction by NADPH to yield (R)-2,3-dihydroxy-isovalerate. The sequence is that of Ketol-acid reductoisomerase (NADP(+)) from Staphylococcus saprophyticus subsp. saprophyticus (strain ATCC 15305 / DSM 20229 / NCIMB 8711 / NCTC 7292 / S-41).